The sequence spans 374 residues: Cell division protein DivIB (374 aa).

The segment at 1 to 90 (MWKISNENDI…EEEHFADRLP (90 aa)) is disordered. Residues 1-103 (MWKISNENDI…KTRNKRLYRR (103 aa)) are Cytoplasmic-facing. Positions 39-53 (YLKKQAEEAASKGEN) are enriched in basic and acidic residues. Positions 56-75 (AEVTITLQEQSQEEPQQHLP) are enriched in polar residues. The chain crosses the membrane as a helical span at residues 104 to 124 (LAFILTCLGTAILVALYFVSP). Residues 125 to 374 (LSRLSEVTVS…GENQEVQQAE (250 aa)) lie on the Extracellular side of the membrane. One can recognise a POTRA domain in the interval 126-197 (SRLSEVTVSG…NSFKIDIQEY (72 aa)). Residues 325–374 (KESEETGSEVSEDSAVENQEVVDPNAGVATDGANNGTPTNGENQEVQQAE) are disordered. Over residues 326-339 (ESEETGSEVSEDSA) the composition is skewed to acidic residues. A compositionally biased stretch (polar residues) spans 356–374 (GANNGTPTNGENQEVQQAE).

The protein belongs to the FtsQ/DivIB family. DivIB subfamily.

It is found in the cell membrane. Cell division protein that may be involved in stabilizing or promoting the assembly of the division complex. The protein is Cell division protein DivIB of Enterococcus faecalis (strain 62).